The sequence spans 311 residues: uncharacterized protein (311 aa).

Belongs to the peptidase C1 family.

This is an uncharacterized protein from Acanthamoeba polyphaga mimivirus (APMV).